We begin with the raw amino-acid sequence, 317 residues long: Ferrochelatase (317 aa).

Residues His-184 and Glu-259 each contribute to the Fe cation site.

Belongs to the ferrochelatase family.

It localises to the cytoplasm. It catalyses the reaction heme b + 2 H(+) = protoporphyrin IX + Fe(2+). The protein operates within porphyrin-containing compound metabolism; protoheme biosynthesis; protoheme from protoporphyrin-IX: step 1/1. Catalyzes the ferrous insertion into protoporphyrin IX. The protein is Ferrochelatase of Chlamydia muridarum (strain MoPn / Nigg).